Here is a 154-residue protein sequence, read N- to C-terminus: MGLSDGEWQLVLNVWGKVEADLGGHGQEVLIRLFKGHPETLEKFDKFKHLKAEDEMRASEDLKKHGTTVLTALGGILKKRGQHAAELAPLAQSHATKHKIPVKYLEFISEAIIQVLQSKHPGDFGADAQAAMSKALELFRNDIAAKYKELGFQG.

One can recognise a Globin domain in the interval 2–148 (GLSDGEWQLV…FRNDIAAKYK (147 aa)). Ser-4 bears the Phosphoserine mark. His-65 serves as a coordination point for nitrite. His-65 provides a ligand contact to O2. At Thr-68 the chain carries Phosphothreonine. Position 94 (His-94) interacts with heme b.

It belongs to the globin family. In terms of assembly, monomeric.

The protein resides in the cytoplasm. The protein localises to the sarcoplasm. The enzyme catalyses Fe(III)-heme b-[protein] + nitric oxide + H2O = Fe(II)-heme b-[protein] + nitrite + 2 H(+). It catalyses the reaction H2O2 + AH2 = A + 2 H2O. In terms of biological role, monomeric heme protein which primary function is to store oxygen and facilitate its diffusion within muscle tissues. Reversibly binds oxygen through a pentacoordinated heme iron and enables its timely and efficient release as needed during periods of heightened demand. Depending on the oxidative conditions of tissues and cells, and in addition to its ability to bind oxygen, it also has a nitrite reductase activity whereby it regulates the production of bioactive nitric oxide. Under stress conditions, like hypoxia and anoxia, it also protects cells against reactive oxygen species thanks to its pseudoperoxidase activity. The polypeptide is Myoglobin (MB) (Lagostomus maximus (Plains viscacha)).